The sequence spans 144 residues: RNA-binding protein 1 (144 aa).

In terms of domain architecture, RRM spans 11-84; it reads CKVYVGNLGS…TRIRVEMSSG (74 aa). The disordered stretch occupies residues 78–115; the sequence is RVEMSSGRSRDRRRGEGGSSGRSGSGRYRITPSARTTS.

The protein belongs to the splicing factor SR family. Interacts with x16 (via Arg/Ser-rich region). Post-translationally, extensively phosphorylated on serine residues in the RS domain. The tandem heptapeptide repeats in the C-terminal domain (CTD) can be highly phosphorylated. The phosphorylation activates Pol II. Phosphorylation occurs at residues 'Ser-2', 'Ser-5' and 'Ser-7' of the heptapeptide repeat and is mediated by P-TEFb. Dephosphorylated by the INTAC complex when transcripts are unfavorably configured for transcriptional elongation, leading to premature transcription termination: dephosphorylation is mediated by the mts/PP2A component of the INTAC complex. In terms of tissue distribution, ubiquitous.

The protein localises to the nucleus. Contributes to the activation of female-specific DSX splicing in vivo by recognizing the RBP1 target sequences within the purine-rich polypyrimidine tract of the female-specific 3' splice site. This chain is RNA-binding protein 1 (Rbp1), found in Drosophila melanogaster (Fruit fly).